A 161-amino-acid polypeptide reads, in one-letter code: Non-specific lipid transfer protein GPI-anchored 24 (161 aa).

The first 23 residues, 1-23 (MAQTTTLILLLATLLVAATTVSG), serve as a signal peptide directing secretion. Disulfide bonds link Cys-42/Cys-79, Cys-49/Cys-63, Cys-64/Cys-104, and Cys-77/Cys-113. N-linked (GlcNAc...) asparagine glycosylation occurs at Asn-92. Residue Asp-138 is the site of GPI-anchor amidated aspartate attachment. Residues 139–161 (AASKLAGTGLVGIVVITIAAMFY) constitute a propeptide, removed in mature form.

It belongs to the plant LTP family.

Its subcellular location is the cell membrane. Functionally, probable lipid transfer protein. This chain is Non-specific lipid transfer protein GPI-anchored 24, found in Arabidopsis thaliana (Mouse-ear cress).